The following is a 376-amino-acid chain: Sulfate/thiosulfate import ATP-binding protein CysA (376 aa).

The region spanning 3–237 (IRLDNISKHF…PNSRFVFDFF (235 aa)) is the ABC transporter domain. 35-42 (GPSGSGKT) contacts ATP.

The protein belongs to the ABC transporter superfamily. Sulfate/tungstate importer (TC 3.A.1.6) family. In terms of assembly, the complex is composed of two ATP-binding proteins (CysA), two transmembrane proteins (CysT and CysW) and a solute-binding protein (CysP).

The protein localises to the cell inner membrane. It catalyses the reaction sulfate(out) + ATP + H2O = sulfate(in) + ADP + phosphate + H(+). The catalysed reaction is thiosulfate(out) + ATP + H2O = thiosulfate(in) + ADP + phosphate + H(+). Its function is as follows. Part of the ABC transporter complex CysAWTP involved in sulfate/thiosulfate import. Responsible for energy coupling to the transport system. The polypeptide is Sulfate/thiosulfate import ATP-binding protein CysA (Vibrio cholerae serotype O1 (strain ATCC 39315 / El Tor Inaba N16961)).